Here is a 485-residue protein sequence, read N- to C-terminus: Warthog protein 1 (485 aa).

A signal peptide spans 1–21; it reads MMVMNPLTATFLAALIGTAAS. The disordered stretch occupies residues 236 to 258; the sequence is DQRLSPSTDVQSDSYVSPTEADP. Positions 239–252 are enriched in polar residues; the sequence is LSPSTDVQSDSYVS.

The protein belongs to the hedgehog family. Post-translationally, the C-terminal domain displays an autoproteolysis activity.

It is found in the secreted. The protein localises to the cell surface. The protein resides in the cell membrane. It localises to the extracellular space. In terms of biological role, intercellular signal essential for a variety of patterning events during development. This Caenorhabditis elegans protein is Warthog protein 1 (wrt-1).